Consider the following 493-residue polypeptide: MKIYIDGEWRDSSSGETIKKYNPSTGEVLDTFPAATRNDVDAAIDSAEDAFKRWSDMTSMERSKILYKALELISKDKDQLTDLLIKENGKVKREAMDETEGVIDQLQYYTEFERKLTGDIVEGTSNKRKIFQYKVPYGIVIAITPWNFPAAMVIRKLAPALLTGNTVILKPSSDTPLTAEWLVKKFVDAGIPKGVLNLITGKGSEIGDYIVEHKKVSLITMTGSTSTGQRIMEKASKNMAKLILELGGKAPFMVWKDANIERALKSLVWAKYLNVGQSCIAAERLYIHEDIYDEFMKKFIEVSKRIKLGDPESSDMGPLINKSAVETTEKYVDIARSSGYKILLGGKKPELSGKYKNGYFYEPTIIENVPQDSPLFQEEIFGPVIGAESVSSVDELYEKANDSKYGLASYLFTEDPELIFEASEKIRFGELYVNMPGPEASQGYHTGFRLTGQAGEGSKYGISEYLKLKNVYVDYSRGNLSISTVNDDLFKNL.

Residues 144–147 (TPWN), arginine 155, 170–174 (KPSSD), 202–208 (KGSEIGD), 223–246 (GSTS…ILEL), cysteine 279, and 379–381 (EIF) contribute to the NADP(+) site. Substrate contacts are provided by asparagine 147 and arginine 155. Glutamate 245 functions as the Proton acceptor in the catalytic mechanism. Cysteine 279 is a binding site for substrate. The active-site Proton donor is the cysteine 279.

The protein belongs to the aldehyde dehydrogenase family. Glyceraldehyde dehydrogenase subfamily. In terms of assembly, homotetramer. Dimer of dimers.

It carries out the reaction D-glyceraldehyde + NADP(+) + H2O = (R)-glycerate + NADPH + 2 H(+). Its pathway is carbohydrate degradation; glycolysis. Stable for 2 hours at 60 degrees Celsius but activity is decreased to less than 50 percent within 15 minutes at 70 degrees Celsius. In terms of biological role, NADP-dependent dehydrogenase of the nED (non-phosphorylated Entner-Doudoroff) pathway with highest activity towards glyceraldehydes (e.g. D,L-glyceraldehyde and D-glyceraldehyde), to a lesser extent towards D,L-glyceraldehyde-3-phosphate and glycolaldehyde, but no activity towards aliphatic or aromatic aldehydes. This is D-glyceraldehyde dehydrogenase (NADP(+)) from Picrophilus torridus (strain ATCC 700027 / DSM 9790 / JCM 10055 / NBRC 100828 / KAW 2/3).